A 505-amino-acid chain; its full sequence is Oxidative stress-induced growth inhibitor 2 (505 aa).

It belongs to the OKL38 family. It depends on NADPH as a cofactor. As to expression, ubiquitous. Expressed at higher levels in testis and ovary.

The protein localises to the midbody. Monooxygenase catalytic activity. May be involved in meiosis or the maturation of germ cells. This chain is Oxidative stress-induced growth inhibitor 2, found in Homo sapiens (Human).